The primary structure comprises 282 residues: NADPH-dependent 7-cyano-7-deazaguanine reductase (282 aa).

Ile88–Ser90 serves as a coordination point for substrate. Ser90 to Lys91 serves as a coordination point for NADPH. Cys190 functions as the Thioimide intermediate in the catalytic mechanism. Asp197 functions as the Proton donor in the catalytic mechanism. His229–Glu230 contributes to the substrate binding site. Arg258–Gly259 provides a ligand contact to NADPH.

It belongs to the GTP cyclohydrolase I family. QueF type 2 subfamily. In terms of assembly, homodimer.

The protein resides in the cytoplasm. It carries out the reaction 7-aminomethyl-7-carbaguanine + 2 NADP(+) = 7-cyano-7-deazaguanine + 2 NADPH + 3 H(+). The protein operates within tRNA modification; tRNA-queuosine biosynthesis. Catalyzes the NADPH-dependent reduction of 7-cyano-7-deazaguanine (preQ0) to 7-aminomethyl-7-deazaguanine (preQ1). The chain is NADPH-dependent 7-cyano-7-deazaguanine reductase from Escherichia coli O9:H4 (strain HS).